Consider the following 140-residue polypeptide: Putative pre-16S rRNA nuclease (140 aa).

The protein belongs to the YqgF nuclease family.

Its subcellular location is the cytoplasm. In terms of biological role, could be a nuclease involved in processing of the 5'-end of pre-16S rRNA. The sequence is that of Putative pre-16S rRNA nuclease from Vibrio vulnificus (strain YJ016).